A 119-amino-acid polypeptide reads, in one-letter code: Ribonuclease P protein component (119 aa).

It belongs to the RnpA family. Consists of a catalytic RNA component (M1 or rnpB) and a protein subunit.

The enzyme catalyses Endonucleolytic cleavage of RNA, removing 5'-extranucleotides from tRNA precursor.. Functionally, RNaseP catalyzes the removal of the 5'-leader sequence from pre-tRNA to produce the mature 5'-terminus. It can also cleave other RNA substrates such as 4.5S RNA. The protein component plays an auxiliary but essential role in vivo by binding to the 5'-leader sequence and broadening the substrate specificity of the ribozyme. The protein is Ribonuclease P protein component of Chlamydia muridarum (strain MoPn / Nigg).